The chain runs to 31 residues: Cytochrome b6-f complex subunit 6 (31 aa).

The helical transmembrane segment at 3-23 threads the bilayer; the sequence is TLTSYFGFLLVALTITLVLFI.

It belongs to the PetL family. As to quaternary structure, the 4 large subunits of the cytochrome b6-f complex are cytochrome b6, subunit IV (17 kDa polypeptide, PetD), cytochrome f and the Rieske protein, while the 4 small subunits are PetG, PetL, PetM and PetN. The complex functions as a dimer.

The protein resides in the plastid. It localises to the chloroplast thylakoid membrane. Component of the cytochrome b6-f complex, which mediates electron transfer between photosystem II (PSII) and photosystem I (PSI), cyclic electron flow around PSI, and state transitions. PetL is important for photoautotrophic growth as well as for electron transfer efficiency and stability of the cytochrome b6-f complex. This is Cytochrome b6-f complex subunit 6 from Populus alba (White poplar).